We begin with the raw amino-acid sequence, 397 residues long: Acetate kinase (397 aa).

Mg(2+) is bound at residue Asn7. Lys14 serves as a coordination point for ATP. Arg91 contributes to the substrate binding site. Catalysis depends on Asp148, which acts as the Proton donor/acceptor. ATP is bound by residues 208–212, 283–285, and 331–335; these read HLGNG, DLR, and GVGEN. Glu384 is a Mg(2+) binding site.

The protein belongs to the acetokinase family. Homodimer. The cofactor is Mg(2+). Requires Mn(2+) as cofactor.

The protein localises to the cytoplasm. The catalysed reaction is acetate + ATP = acetyl phosphate + ADP. Its pathway is metabolic intermediate biosynthesis; acetyl-CoA biosynthesis; acetyl-CoA from acetate: step 1/2. Catalyzes the formation of acetyl phosphate from acetate and ATP. Can also catalyze the reverse reaction. The protein is Acetate kinase of Syntrophomonas wolfei subsp. wolfei (strain DSM 2245B / Goettingen).